Reading from the N-terminus, the 416-residue chain is Enolase (416 aa).

A (2R)-2-phosphoglycerate-binding site is contributed by glutamine 160. The active-site Proton donor is glutamate 204. Positions 239, 280, and 306 each coordinate Mg(2+). Positions 331, 360, 361, and 382 each coordinate (2R)-2-phosphoglycerate. The Proton acceptor role is filled by lysine 331.

This sequence belongs to the enolase family. It depends on Mg(2+) as a cofactor.

Its subcellular location is the cytoplasm. The protein resides in the secreted. It localises to the cell surface. It carries out the reaction (2R)-2-phosphoglycerate = phosphoenolpyruvate + H2O. Its pathway is carbohydrate degradation; glycolysis; pyruvate from D-glyceraldehyde 3-phosphate: step 4/5. Its function is as follows. Catalyzes the reversible conversion of 2-phosphoglycerate (2-PG) into phosphoenolpyruvate (PEP). It is essential for the degradation of carbohydrates via glycolysis. This chain is Enolase, found in Sulfurisphaera tokodaii (strain DSM 16993 / JCM 10545 / NBRC 100140 / 7) (Sulfolobus tokodaii).